Consider the following 292-residue polypeptide: S-adenosyl-L-methionine-dependent Diels-Alderase iccD (292 aa).

Residues 240–262 (LPVVRMFYVVLLVPYLFVRLLGI) traverse the membrane as a helical segment.

This sequence belongs to the class I-like SAM-binding methyltransferase superfamily. Erg6/SMT family. S-adenosyl-L-methionine serves as cofactor.

It is found in the membrane. The catalysed reaction is 3-[(2E,4E,8S,10E,12Z)-4,8-dimethyltetradeca-2,4,10,12-tetraenoyl]-4-hydroxy-5-(4-hydroxyphenyl)-1,2-dihydropyridin-2-one = 8-epi-ilicicolin H. It functions in the pathway mycotoxin biosynthesis. Its function is as follows. S-adenosyl-l-methionine-dependent Diels-Alderase; part of the gene cluster that mediates the biosynthesis of ilicicolin H, a 4-hydroxy-2-pyridonealkaloid that has potent and broad antifungal activities by inhibiting the mitochondrial respiration chain. IccD catalyzes the Diels-Alder reaction that converts the acyclic 2-pyridone intermediate to 8-epi-ilicicolin H. The biosynthesis of ilicicolin H starts with formation of the tetramic acid by the hybrid PKS-NRPS synthetase iccA with the partnering trans-enoyl reductase iccB since iccA lacks a designated enoylreductase (ER) domain. The cytochrome P450 monooxygenase iccC then catalyzes the ring expansion of the tetramate to the acyclic 2-pyridone. The pericyclase iccD further converts the acyclic 2-pyridone into 8-epi-ilicicolin H. Finally, the epimerase iccE converts 8-epi-ilicicolin H into ilicicolin H via epimerization. IccA to iccE are sufficient for ilicicolin H biosynthesis and the roles of the remaining enzymes, iccF, iccG and iccH within the pathway have still to be determined. In Talaromyces variabilis (Penicillium variabile), this protein is S-adenosyl-L-methionine-dependent Diels-Alderase iccD.